The following is a 462-amino-acid chain: MAVMKFTWRSIIPRCSKGIEEPEAEAEAEPETKKQDSKQGSFSRLAMIDLSYPSSRFTEDLSTSLAGSNLYVFTLEELKVITQCFSSANFLGEGGFGPVHKGFIDDNLRPGLEAQPVAVKLLDLEGLQGHREWLTEVVFLAQLSHPHLVKLIGYCCEDEHRLLVYEYMPRGSLENQLFAKYSVPLPWSTRMKIALGAAKGLAYLHEAEKPVIYRDFKASNILLDSDYSAKLSDFGLAKDGPEGDKTHVSTRVMGTRGYAAPEYIMTGHLTAMSDVYSFGVVLLELLTGRRSLDKSRSPREQNLAEWARPMLNESRRLARIMDPKLEGQYSETGARKAAALAYQCLSHRAKQRPKMSDVVNILEPLLDYEETSVGTFVYTVPTHQNGGSPPKDDTDTKECEAKTELKKENGDHHNRHHHRRSHKSRDGHRHRNKSSSQSSVHSENYTSKQTLENGSNEECNID.

The region spanning F85–L366 is the Protein kinase domain. ATP-binding positions include L91–V99 and K120. Phosphotyrosine is present on residues Y165 and Y167. D215 acts as the Proton acceptor in catalysis.

Belongs to the protein kinase superfamily. Ser/Thr protein kinase family. As to quaternary structure, interacts with the Verticillium dahliae elicitor EPD1 (AC G2WWH6). Post-translationally, phosphorylated at Tyr-165 and Tyr-167 in the presence of pathogen-associated molecular patterns (PAMPs); this triggers the expression of pathogenesis-related genes (e.g. PR5 and PR16). Mostly expressed in roots and, to a lesser extent, in leaves.

It is found in the cell membrane. The enzyme catalyses L-seryl-[protein] + ATP = O-phospho-L-seryl-[protein] + ADP + H(+). It catalyses the reaction L-threonyl-[protein] + ATP = O-phospho-L-threonyl-[protein] + ADP + H(+). In terms of biological role, required for pathogen-associated molecular pattern (PAMP, e.g. chitin and flg22)-triggered immunity (PTI) involving reactive oxygen species (ROS) accumulation and triggering plant defense, including defense-related gene expression (e.g. PR1 and LOX). Ensures specific recognition of the EPD1 effector of Verticillium dahliae, resulting in a hypersensitive response known as effector-triggered immunity (ETI), characterized by the activation of programmed cell death to limit infection by the pathogen. Priming plants with the incompatible pathogen V.dahliae leads to an increased resistance to compatible pathogens, as a result of systemic acquired resistance (SAR). The polypeptide is EPD1-interacting receptor-like cytoplasmic serine/threonine-protein kinase 5A (Gossypium barbadense (Sea Island cotton)).